The following is a 254-amino-acid chain: Thiazole synthase (254 aa).

Lysine 95 functions as the Schiff-base intermediate with DXP in the catalytic mechanism. Residues glycine 156, 182 to 183 (AG), and 204 to 205 (NT) contribute to the 1-deoxy-D-xylulose 5-phosphate site.

The protein belongs to the ThiG family. As to quaternary structure, homotetramer. Forms heterodimers with either ThiH or ThiS.

It localises to the cytoplasm. The enzyme catalyses [ThiS sulfur-carrier protein]-C-terminal-Gly-aminoethanethioate + 2-iminoacetate + 1-deoxy-D-xylulose 5-phosphate = [ThiS sulfur-carrier protein]-C-terminal Gly-Gly + 2-[(2R,5Z)-2-carboxy-4-methylthiazol-5(2H)-ylidene]ethyl phosphate + 2 H2O + H(+). Its pathway is cofactor biosynthesis; thiamine diphosphate biosynthesis. In terms of biological role, catalyzes the rearrangement of 1-deoxy-D-xylulose 5-phosphate (DXP) to produce the thiazole phosphate moiety of thiamine. Sulfur is provided by the thiocarboxylate moiety of the carrier protein ThiS. In vitro, sulfur can be provided by H(2)S. The sequence is that of Thiazole synthase from Shewanella piezotolerans (strain WP3 / JCM 13877).